Here is a 622-residue protein sequence, read N- to C-terminus: MSLDISQFPVLAQANTPNELRQLPQALLPQVADELREFLLKSVGISSGHFASGLGTVELTVALHYVYNTPFDRLIWDVGHQAYPHKILTGRRDKMHTIRQKDGLHPFPWREESEYDTFSVGHSGTSISAALAMAIAAEKEQAGRKVVAVIGDGAMTGGMVFEAMNHAGDLHNDMLVVLNDNEMSISENVGALNNHLAQLMSGRFYTTLREGGKKVLKGMPVIKEMAKRTEEHLKGMVVPGTLFEELGFNYIGPIDGHDVDALVETMRNMRNLKGPQVLHIMTKKGRGYEPAEKDPIGWHAVPKFDPSLFKKPATKPGLPTFSQVFGKWLCDIAEQDEKVLAITPAMREGSGMVEFSQRFPKQYFDAAIAEQHAVTLSAGFACEGFKPVVAIYSTFLQRAYDQLIHDVALQQLPVLFAIDRGGIVGADGPTHQGAFDLSFMRCIPNMVIMAPSDENECRQMLYTGYCYDAGPSAVRYPRGCATGATQVEAMTALPIGKGVIKRVGKRIAILNFGTLLASALTAAESLDATVVDMRFVKPLDVDLVKEMAQTHEVLVTVEENAIMGGAGAGVLEQLQKLRMPKAVLQIGLPDEFIKHGSPEEVTHDLQLDAEGILAQINAYLAQ.

Thiamine diphosphate contacts are provided by residues His80 and Gly121 to Ser123. Asp152 lines the Mg(2+) pocket. Thiamine diphosphate contacts are provided by residues Gly153–Ala154, Asn181, Tyr288, and Glu370. Residue Asn181 participates in Mg(2+) binding.

This sequence belongs to the transketolase family. DXPS subfamily. As to quaternary structure, homodimer. The cofactor is Mg(2+). Thiamine diphosphate serves as cofactor.

It carries out the reaction D-glyceraldehyde 3-phosphate + pyruvate + H(+) = 1-deoxy-D-xylulose 5-phosphate + CO2. The protein operates within metabolic intermediate biosynthesis; 1-deoxy-D-xylulose 5-phosphate biosynthesis; 1-deoxy-D-xylulose 5-phosphate from D-glyceraldehyde 3-phosphate and pyruvate: step 1/1. In terms of biological role, catalyzes the acyloin condensation reaction between C atoms 2 and 3 of pyruvate and glyceraldehyde 3-phosphate to yield 1-deoxy-D-xylulose-5-phosphate (DXP). In Shewanella baltica (strain OS185), this protein is 1-deoxy-D-xylulose-5-phosphate synthase.